The primary structure comprises 298 residues: Ribosomal protein L11 methyltransferase (298 aa).

Positions 152, 176, 198, and 236 each coordinate S-adenosyl-L-methionine.

Belongs to the methyltransferase superfamily. PrmA family.

The protein resides in the cytoplasm. The catalysed reaction is L-lysyl-[protein] + 3 S-adenosyl-L-methionine = N(6),N(6),N(6)-trimethyl-L-lysyl-[protein] + 3 S-adenosyl-L-homocysteine + 3 H(+). Functionally, methylates ribosomal protein L11. The chain is Ribosomal protein L11 methyltransferase from Polaromonas sp. (strain JS666 / ATCC BAA-500).